A 157-amino-acid chain; its full sequence is MRILGIDPGSRKCGYAIISHASNKLSLITAGFINITTTRLQEQILDLIEALDCLLDRYEVNEVAIEDIFFAYNPKSVIKLAQFRGALSLKILERIGNFSEYTPLQVKKALTGNGKAAKEQVAFMVKRLLNITSEIKPLDISDAIAVAITHAQRLKLH.

Active-site residues include D7, E66, and D139. D7, E66, and D139 together coordinate Mg(2+).

It belongs to the RuvC family. As to quaternary structure, homodimer which binds Holliday junction (HJ) DNA. The HJ becomes 2-fold symmetrical on binding to RuvC with unstacked arms; it has a different conformation from HJ DNA in complex with RuvA. In the full resolvosome a probable DNA-RuvA(4)-RuvB(12)-RuvC(2) complex forms which resolves the HJ. Mg(2+) is required as a cofactor.

The protein resides in the cytoplasm. The enzyme catalyses Endonucleolytic cleavage at a junction such as a reciprocal single-stranded crossover between two homologous DNA duplexes (Holliday junction).. Functionally, the RuvA-RuvB-RuvC complex processes Holliday junction (HJ) DNA during genetic recombination and DNA repair. Endonuclease that resolves HJ intermediates. Cleaves cruciform DNA by making single-stranded nicks across the HJ at symmetrical positions within the homologous arms, yielding a 5'-phosphate and a 3'-hydroxyl group; requires a central core of homology in the junction. The consensus cleavage sequence is 5'-(A/T)TT(C/G)-3'. Cleavage occurs on the 3'-side of the TT dinucleotide at the point of strand exchange. HJ branch migration catalyzed by RuvA-RuvB allows RuvC to scan DNA until it finds its consensus sequence, where it cleaves and resolves the cruciform DNA. In terms of biological role, required for efficient infection in a mouse model system. The polypeptide is Crossover junction endodeoxyribonuclease RuvC (Helicobacter pylori (strain G27)).